A 69-amino-acid polypeptide reads, in one-letter code: MAKATKKAEAKTVTIEQIGSPIRRPDVQQRTLIGLGLNKMHRRRTLEDTPSVRGMIRAVQHLVRVVDEK.

The protein belongs to the universal ribosomal protein uL30 family. Part of the 50S ribosomal subunit.

This chain is Large ribosomal subunit protein uL30, found in Rhizobium etli (strain CIAT 652).